We begin with the raw amino-acid sequence, 439 residues long: C4-dicarboxylate transport protein 1 (439 aa).

6 consecutive transmembrane segments (helical) span residues 18–38 (VLYI…WLWP), 56–76 (LIKM…IAHV), 91–111 (IYFE…ANVI), 157–177 (GEIL…MSLG), 193–213 (AIFG…FGAM), and 231–251 (LIAT…GIIA).

This sequence belongs to the dicarboxylate/amino acid:cation symporter (DAACS) (TC 2.A.23) family.

Its subcellular location is the cell inner membrane. In terms of biological role, responsible for the transport of dicarboxylates such as succinate, fumarate, and malate from the periplasm across the membrane. This Bradyrhizobium sp. (strain ORS 278) protein is C4-dicarboxylate transport protein 1.